Here is a 173-residue protein sequence, read N- to C-terminus: Crossover junction endodeoxyribonuclease RuvC (173 aa).

Residues D8, E67, and D139 contribute to the active site. Mg(2+) contacts are provided by D8, E67, and D139.

It belongs to the RuvC family. Homodimer which binds Holliday junction (HJ) DNA. The HJ becomes 2-fold symmetrical on binding to RuvC with unstacked arms; it has a different conformation from HJ DNA in complex with RuvA. In the full resolvosome a probable DNA-RuvA(4)-RuvB(12)-RuvC(2) complex forms which resolves the HJ. Mg(2+) serves as cofactor.

The protein localises to the cytoplasm. The enzyme catalyses Endonucleolytic cleavage at a junction such as a reciprocal single-stranded crossover between two homologous DNA duplexes (Holliday junction).. In terms of biological role, the RuvA-RuvB-RuvC complex processes Holliday junction (HJ) DNA during genetic recombination and DNA repair. Endonuclease that resolves HJ intermediates. Cleaves cruciform DNA by making single-stranded nicks across the HJ at symmetrical positions within the homologous arms, yielding a 5'-phosphate and a 3'-hydroxyl group; requires a central core of homology in the junction. The consensus cleavage sequence is 5'-(A/T)TT(C/G)-3'. Cleavage occurs on the 3'-side of the TT dinucleotide at the point of strand exchange. HJ branch migration catalyzed by RuvA-RuvB allows RuvC to scan DNA until it finds its consensus sequence, where it cleaves and resolves the cruciform DNA. The polypeptide is Crossover junction endodeoxyribonuclease RuvC (Salmonella arizonae (strain ATCC BAA-731 / CDC346-86 / RSK2980)).